A 395-amino-acid chain; its full sequence is Multidrug resistance protein MdtL (395 aa).

12 helical membrane-spanning segments follow: residues 4 to 24 (FLLC…MYLV), 42 to 62 (IAFS…GKIA), 69 to 89 (PVAI…SRAS), 93 to 113 (LFLS…VVAF), 131 to 151 (LLNG…HLIM), 158 to 178 (SLFY…LFIL), 217 to 237 (VSVI…VMGF), 247 to 267 (ALTA…LGLF), 271 to 291 (TLML…SLAH), 295 to 315 (VTLF…GVAM), 328 to 350 (VASS…LAAI), and 355 to 377 (AMNM…IFSV).

The protein belongs to the major facilitator superfamily. DHA1 family. MdtL (TC 2.A.1.2.22) subfamily.

Its subcellular location is the cell inner membrane. This chain is Multidrug resistance protein MdtL, found in Salmonella newport (strain SL254).